Reading from the N-terminus, the 297-residue chain is Coatomer subunit epsilon-2 (297 aa).

It belongs to the COPE family. As to quaternary structure, oligomeric complex that consists of at least the alpha, beta, beta', gamma, delta, epsilon and zeta subunits.

Its subcellular location is the cytoplasm. The protein resides in the golgi apparatus membrane. The protein localises to the cytoplasmic vesicle. It is found in the COPI-coated vesicle membrane. Its function is as follows. The coatomer is a cytosolic protein complex that binds to dilysine motifs and reversibly associates with Golgi non-clathrin-coated vesicles, which further mediate biosynthetic protein transport from the ER, via the Golgi up to the trans Golgi network. The coatomer complex is required for budding from Golgi membranes, and is essential for the retrograde Golgi-to-ER transport of dilysine-tagged proteins. This is Coatomer subunit epsilon-2 from Oryza sativa subsp. indica (Rice).